A 112-amino-acid polypeptide reads, in one-letter code: Hydrogenase maturation factor HypA (112 aa).

H2 serves as a coordination point for Ni(2+). Zn(2+) is bound by residues C72, C75, C88, and C91.

It belongs to the HypA/HybF family.

Involved in the maturation of [NiFe] hydrogenases. Required for nickel insertion into the metal center of the hydrogenase. The sequence is that of Hydrogenase maturation factor HypA from Francisella philomiragia subsp. philomiragia (strain ATCC 25017 / CCUG 19701 / FSC 153 / O#319-036).